We begin with the raw amino-acid sequence, 272 residues long: 3-methyl-2-oxobutanoate hydroxymethyltransferase (272 aa).

Positions 53 and 92 each coordinate Mg(2+). Residues D53–S54, D92, and K120 each bind 3-methyl-2-oxobutanoate. Residue E122 participates in Mg(2+) binding. E189 (proton acceptor) is an active-site residue.

This sequence belongs to the PanB family. As to quaternary structure, homodecamer; pentamer of dimers. Mg(2+) serves as cofactor.

The protein resides in the cytoplasm. The catalysed reaction is 3-methyl-2-oxobutanoate + (6R)-5,10-methylene-5,6,7,8-tetrahydrofolate + H2O = 2-dehydropantoate + (6S)-5,6,7,8-tetrahydrofolate. It functions in the pathway cofactor biosynthesis; (R)-pantothenate biosynthesis; (R)-pantoate from 3-methyl-2-oxobutanoate: step 1/2. In terms of biological role, catalyzes the reversible reaction in which hydroxymethyl group from 5,10-methylenetetrahydrofolate is transferred onto alpha-ketoisovalerate to form ketopantoate. This chain is 3-methyl-2-oxobutanoate hydroxymethyltransferase, found in Ralstonia pickettii (strain 12J).